A 430-amino-acid polypeptide reads, in one-letter code: Uric acid permease PucK (430 aa).

Transmembrane regions (helical) follow at residues 18-38 (MLAMYAGAILVPLIVGAAIGL), 43-63 (LTYLIAIDLFMCGAATLLQLW), 67-87 (YFGIGLPVVLGCTFTAVGPMI), 97-117 (AIYGAIIAAGLIVVLAAGFFG), 122-142 (FFPPVVTGSVVMIIGISLIPT), 163-183 (LLGFGVTAFILLLFYFFKGFI), 185-205 (SIAILLGLIAGTAAAYFMGKV), 209-229 (EVLEASWLHVPSLFYFGPPTF), 233-253 (AVVTMLLVAIVSLVESTGVYF), 274-294 (AEGLAILLGGLFNAFPYTAFS), 310-330 (VIAITGIILVAIGLVPKAAAL), 333-353 (VIPTPVLGGAMIVMFGMVISY), 369-389 (LLIIASSVSLGLGATTVPALF), and 398-418 (VLAGSGIVIGSLTAIALHAFF).

The protein belongs to the nucleobase:cation symporter-2 (NCS2) (TC 2.A.40) family.

The protein localises to the cell membrane. Uptake of uric acid. In Bacillus subtilis (strain 168), this protein is Uric acid permease PucK (pucK).